A 119-amino-acid chain; its full sequence is Large ribosomal subunit protein bL19 (119 aa).

The protein belongs to the bacterial ribosomal protein bL19 family.

In terms of biological role, this protein is located at the 30S-50S ribosomal subunit interface and may play a role in the structure and function of the aminoacyl-tRNA binding site. This chain is Large ribosomal subunit protein bL19, found in Limosilactobacillus reuteri (strain DSM 20016) (Lactobacillus reuteri).